A 321-amino-acid chain; its full sequence is Lipoyl synthase (321 aa).

The [4Fe-4S] cluster site is built by Cys68, Cys73, Cys79, Cys94, Cys98, Cys101, and Ser308. The region spanning 80–297 (FNHGTATFMI…KDYAEEIGFT (218 aa)) is the Radical SAM core domain.

It belongs to the radical SAM superfamily. Lipoyl synthase family. It depends on [4Fe-4S] cluster as a cofactor.

It localises to the cytoplasm. The catalysed reaction is [[Fe-S] cluster scaffold protein carrying a second [4Fe-4S](2+) cluster] + N(6)-octanoyl-L-lysyl-[protein] + 2 oxidized [2Fe-2S]-[ferredoxin] + 2 S-adenosyl-L-methionine + 4 H(+) = [[Fe-S] cluster scaffold protein] + N(6)-[(R)-dihydrolipoyl]-L-lysyl-[protein] + 4 Fe(3+) + 2 hydrogen sulfide + 2 5'-deoxyadenosine + 2 L-methionine + 2 reduced [2Fe-2S]-[ferredoxin]. The protein operates within protein modification; protein lipoylation via endogenous pathway; protein N(6)-(lipoyl)lysine from octanoyl-[acyl-carrier-protein]: step 2/2. Its function is as follows. Catalyzes the radical-mediated insertion of two sulfur atoms into the C-6 and C-8 positions of the octanoyl moiety bound to the lipoyl domains of lipoate-dependent enzymes, thereby converting the octanoylated domains into lipoylated derivatives. This Shewanella loihica (strain ATCC BAA-1088 / PV-4) protein is Lipoyl synthase.